The following is a 215-amino-acid chain: Large ribosomal subunit protein uL3 (215 aa).

Residues 136–161 (GVSISHRSHGSTGQRQDPGKVFKGKK) are disordered. Residue Gln-151 is modified to N5-methylglutamine.

The protein belongs to the universal ribosomal protein uL3 family. In terms of assembly, part of the 50S ribosomal subunit. Forms a cluster with proteins L14 and L19. Methylated by PrmB.

Its function is as follows. One of the primary rRNA binding proteins, it binds directly near the 3'-end of the 23S rRNA, where it nucleates assembly of the 50S subunit. This chain is Large ribosomal subunit protein uL3, found in Rickettsia akari (strain Hartford).